A 181-amino-acid chain; its full sequence is Large ribosomal subunit protein uL5 (181 aa).

Belongs to the universal ribosomal protein uL5 family. In terms of assembly, part of the 50S ribosomal subunit; part of the 5S rRNA/L5/L18/L25 subcomplex. Contacts the 5S rRNA and the P site tRNA. Forms a bridge to the 30S subunit in the 70S ribosome.

In terms of biological role, this is one of the proteins that bind and probably mediate the attachment of the 5S RNA into the large ribosomal subunit, where it forms part of the central protuberance. In the 70S ribosome it contacts protein S13 of the 30S subunit (bridge B1b), connecting the 2 subunits; this bridge is implicated in subunit movement. Contacts the P site tRNA; the 5S rRNA and some of its associated proteins might help stabilize positioning of ribosome-bound tRNAs. This chain is Large ribosomal subunit protein uL5, found in Mycoplasmopsis pulmonis (strain UAB CTIP) (Mycoplasma pulmonis).